Consider the following 794-residue polypeptide: Phosphoenolpyruvate synthase (794 aa).

His-422 functions as the Tele-phosphohistidine intermediate in the catalytic mechanism. Residues Arg-512, Arg-579, Glu-681, Gly-702, Ser-703, Asn-704, and Asp-705 each contribute to the substrate site. Glu-681 serves as a coordination point for Mg(2+). Residue Asp-705 coordinates Mg(2+). Cys-752 serves as the catalytic Proton donor.

It belongs to the PEP-utilizing enzyme family. Mg(2+) serves as cofactor.

It carries out the reaction pyruvate + ATP + H2O = phosphoenolpyruvate + AMP + phosphate + 2 H(+). Its pathway is carbohydrate biosynthesis; gluconeogenesis. Functionally, catalyzes the phosphorylation of pyruvate to phosphoenolpyruvate. The polypeptide is Phosphoenolpyruvate synthase (ppsA) (Neisseria meningitidis serogroup B (strain ATCC BAA-335 / MC58)).